We begin with the raw amino-acid sequence, 505 residues long: L-carnitine/gamma-butyrobetaine antiporter (505 aa).

12 helical membrane passes run 10-30, 51-71, 92-112, 143-163, 195-215, 231-251, 263-283, 316-336, 347-367, 403-423, 446-466, and 475-495; these read IEPK…WLTV, WGWA…WLVF, IFMM…SIEI, GPLP…FFFV, FYLV…TPLV, LDAI…ACGL, SYLS…SFIM, WTVF…IFLA, LCFG…TVLG, LSTA…VTLI, LLVR…LLAL, and AIIA…LSFI.

Belongs to the BCCT transporter (TC 2.A.15) family. CaiT subfamily. Homotrimer.

Its subcellular location is the cell inner membrane. The catalysed reaction is 4-(trimethylamino)butanoate(in) + (R)-carnitine(out) = 4-(trimethylamino)butanoate(out) + (R)-carnitine(in). The protein operates within amine and polyamine metabolism; carnitine metabolism. Functionally, catalyzes the exchange of L-carnitine for gamma-butyrobetaine. The chain is L-carnitine/gamma-butyrobetaine antiporter from Salmonella gallinarum (strain 287/91 / NCTC 13346).